The chain runs to 105 residues: Large ribosomal subunit protein uL24 (105 aa).

The tract at residues 67 to 105 (HISNLNPVDPKTGKATRIGRRKSSEGTLVRYSKKSGEEI) is disordered.

It belongs to the universal ribosomal protein uL24 family. As to quaternary structure, part of the 50S ribosomal subunit.

In terms of biological role, one of two assembly initiator proteins, it binds directly to the 5'-end of the 23S rRNA, where it nucleates assembly of the 50S subunit. Functionally, one of the proteins that surrounds the polypeptide exit tunnel on the outside of the subunit. The sequence is that of Large ribosomal subunit protein uL24 from Bacteroides thetaiotaomicron (strain ATCC 29148 / DSM 2079 / JCM 5827 / CCUG 10774 / NCTC 10582 / VPI-5482 / E50).